The following is a 293-amino-acid chain: Ribosomal protein L11 methyltransferase (293 aa).

Residues Thr145, Gly166, Asp188, and Asn230 each contribute to the S-adenosyl-L-methionine site.

Belongs to the methyltransferase superfamily. PrmA family.

The protein resides in the cytoplasm. It carries out the reaction L-lysyl-[protein] + 3 S-adenosyl-L-methionine = N(6),N(6),N(6)-trimethyl-L-lysyl-[protein] + 3 S-adenosyl-L-homocysteine + 3 H(+). Methylates ribosomal protein L11. The polypeptide is Ribosomal protein L11 methyltransferase (Salmonella newport (strain SL254)).